The sequence spans 209 residues: Large ribosomal subunit protein uL3 (209 aa).

Q150 carries the N5-methylglutamine modification.

Belongs to the universal ribosomal protein uL3 family. In terms of assembly, part of the 50S ribosomal subunit. Forms a cluster with proteins L14 and L19. Methylated by PrmB.

In terms of biological role, one of the primary rRNA binding proteins, it binds directly near the 3'-end of the 23S rRNA, where it nucleates assembly of the 50S subunit. The chain is Large ribosomal subunit protein uL3 from Ectopseudomonas mendocina (strain ymp) (Pseudomonas mendocina).